Here is a 197-residue protein sequence, read N- to C-terminus: Large ribosomal subunit protein bL25 (197 aa).

This sequence belongs to the bacterial ribosomal protein bL25 family. CTC subfamily. As to quaternary structure, part of the 50S ribosomal subunit; part of the 5S rRNA/L5/L18/L25 subcomplex. Contacts the 5S rRNA. Binds to the 5S rRNA independently of L5 and L18.

This is one of the proteins that binds to the 5S RNA in the ribosome where it forms part of the central protuberance. The polypeptide is Large ribosomal subunit protein bL25 (Carboxydothermus hydrogenoformans (strain ATCC BAA-161 / DSM 6008 / Z-2901)).